The chain runs to 176 residues: Superoxide oxidase CybB (176 aa).

Residues 1–7 (MENKYSR) lie on the Cytoplasmic side of the membrane. A helical transmembrane segment spans residues 8-29 (LQISIHWLVFLLVIAAYCAMEF). A heme b-binding site is contributed by His-13. Topologically, residues 30 to 39 (RGFFPRSDRP) are periplasmic. A helical membrane pass occupies residues 40–64 (LINMIHVSCGISILVLMVVRLLLRL). A heme b-binding site is contributed by His-45. The Cytoplasmic portion of the chain corresponds to 65-77 (KYPTPPIIPKPKP). Residues 78-103 (MMTGLAHLGHLVIYLLFIALPVIGLV) traverse the membrane as a helical segment. At 104–135 (MMYNRGNPWFAFGLTMPYASEANFERVDSLKS) the chain is on the periplasmic side. A helical membrane pass occupies residues 136–158 (WHETLANLGYFVIGLHAAAALAH). Positions 137 and 151 each coordinate heme b. Over 159–176 (HYFWKDNTLLRMMPRKRS) the chain is Cytoplasmic.

It belongs to the cytochrome b561 family. As to quaternary structure, monomer. It depends on heme b as a cofactor.

Its subcellular location is the cell inner membrane. It carries out the reaction a ubiquinol + 2 O2 = 2 superoxide + a ubiquinone + 2 H(+). The catalysed reaction is a menaquinol + 2 O2 = 2 superoxide + a menaquinone + 2 H(+). Its activity is regulated as follows. Quinone binding to the enzyme accelerates the reaction with superoxide. Functionally, B-type di-heme cytochrome. Catalyzes the oxidation of superoxide to molecular oxygen and transfers the extracted electrons to ubiquinone through the two hemes. Can also use menaquinone. The enzyme may be responsible for the detoxification of the superoxide anion produced in the membrane or at its surface. However, it can also efficiently catalyze the formation of superoxide from ubiquinol under physiological conditions. This chain is Superoxide oxidase CybB, found in Escherichia coli (strain K12).